The chain runs to 265 residues: Sulfur carrier protein FdhD (265 aa).

The Cysteine persulfide intermediate role is filled by Cys-107.

Belongs to the FdhD family.

It localises to the cytoplasm. Functionally, required for formate dehydrogenase (FDH) activity. Acts as a sulfur carrier protein that transfers sulfur from IscS to the molybdenum cofactor prior to its insertion into FDH. This chain is Sulfur carrier protein FdhD, found in Staphylococcus aureus (strain MRSA252).